Here is a 787-residue protein sequence, read N- to C-terminus: MNRKNVIRMVTAIAVVVLLGWSFFYFSDDTRGYKFVDTSVAMSQINGHNVKSAQIDDREQQLRLTLKKGNNDTDGSDKVITKYPTGYAVDLFNALSAKNTKVTTAVNEGSILGELLVYVLPLLLLVGLFVMFSRMQGGARMGFGFGKSRAKQLSKDMPKTTFADVAGVDEAVEELYEIKDFLQNPCRYQTLGAKIPKGVLLYGPPGTGKTLLARAVAGEAGVPFFTISGSDFVEMFVGVGASRVRDLFDQAKQNSPCIIFVDEIDAVGRQRGTGLGGGHDEREQTLNQLLVEMDGFGDRAGVILIAATNRPDILDPALLRPGRFDRQIPVSNPDLAGRRAVLRVHSKGKPIADDADLDGLAKRTVGMTGADLANVVNEAALLTARENGLVITGPALEEAVDRVIGGPRRKGRIISEQEKKITAYHEGGHTLAAWAMPDIEPIYKVTILARGRTGGHAVAVPEEDKGLRTRSEMIAQLVFAMGGRAAEELVFREPTTGAVSDIEKATKIARSMVTEFGMSSKLGAVRYGSEHGDPFLGRTMGTQADYSHEVARDIDDEVRKLIEAAHTEAWEILTEYRDVLDTLAGELLEKETLHRPELEGIFASVEKRPRLTMFDDFGGRIPSDKPPIKTPGELAIERGEPWPQPVPEPAFKAAIARASQAAEASHQAAQSDTDGPPGQGANGSHAGDRQRQHGPTQPDYGAPPGWHAPGWPPQQPPDYWYPPEQQPSQSPYWPQPAPSYPGQAPPPYPSYPPCPSYPPPGQSAPDAGKPPAQLDEGVSPSNPPAHG.

The Cytoplasmic segment spans residues 1–5; the sequence is MNRKN. The chain crosses the membrane as a helical span at residues 6–26; it reads VIRMVTAIAVVVLLGWSFFYF. The Extracellular portion of the chain corresponds to 27 to 110; sequence SDDTRGYKFV…KVTTAVNEGS (84 aa). Residues 111-131 form a helical membrane-spanning segment; that stretch reads ILGELLVYVLPLLLLVGLFVM. At 132-787 the chain is on the cytoplasmic side; sequence FSRMQGGARM…VSPSNPPAHG (656 aa). 203–210 lines the ATP pocket; sequence GPPGTGKT. Residue His425 coordinates Zn(2+). Glu426 is an active-site residue. 2 residues coordinate Zn(2+): His429 and Asp501. A disordered region spans residues 616 to 787; the sequence is DFGGRIPSDK…VSPSNPPAHG (172 aa). 2 stretches are compositionally biased toward low complexity: residues 650 to 671 and 700 to 709; these read AFKA…AAQS and YGAPPGWHAP. A compositionally biased stretch (pro residues) spans 710 to 720; that stretch reads GWPPQQPPDYW. Positions 721–732 are enriched in low complexity; that stretch reads YPPEQQPSQSPY. The span at 733–762 shows a compositional bias: pro residues; it reads WPQPAPSYPGQAPPPYPSYPPCPSYPPPGQ.

This sequence in the central section; belongs to the AAA ATPase family. It in the C-terminal section; belongs to the peptidase M41 family. Homohexamer. Zn(2+) is required as a cofactor.

It localises to the cell membrane. Acts as a processive, ATP-dependent zinc metallopeptidase for both cytoplasmic and membrane proteins. Plays a role in the quality control of integral membrane proteins. This chain is ATP-dependent zinc metalloprotease FtsH, found in Mycobacterium leprae (strain TN).